Reading from the N-terminus, the 136-residue chain is MQREHKTHNKLSFIYITPLYISPINQTRLTYLSSSFLLSSSSKMCLSSSETFSDTPTRLVLYLKTQSHVRIPRLSRRRRMWREEKKMEMINLKLYVENQNIIRENEKLKKKALLLHQENKTLFSLLQTKKLSSVHK.

Residues 97-122 (ENQNIIRENEKLKKKALLLHQENKTL) adopt a coiled-coil conformation.

As to quaternary structure, interacts with REV. Expressed in the adaxial epidermis of the cotyledons and in the vascular cylinder of wild-type torpedo stage embryos.

Competitive inhibitor of the HD-ZIPIII transcription factors in shoot apical meristem (SAM) development. Acts by forming non-functional heterodimers. Part of a negative feedback loop. Essential for proper functioning of stem cells in the SAM. This is Protein LITTLE ZIPPER 1 from Arabidopsis thaliana (Mouse-ear cress).